The primary structure comprises 300 residues: Cholesterol 25-hydroxylase-like protein (300 aa).

N-linked (GlcNAc...) asparagine glycosylation occurs at Asn9. 3 helical membrane-spanning segments follow: residues 43 to 63 (LFPPFYALSIDYTWVAVFTFI), 95 to 115 (LQGWNQLLWIYPMALVQLIWV), and 130 to 152 (MVSQLAIFFLAFDFTYFWFHYFN). The 132-residue stretch at 135–266 (AIFFLAFDFT…WFNYLDRLMG (132 aa)) folds into the Fatty acid hydroxylase domain. The short motif at 148 to 152 (FHYFN) is the Histidine box-1 element. A Histidine box-2 motif is present at residues 163-167 (HSVHH). The helical transmembrane segment at 180–200 (LHPFELFFVATFITTVPWIFP) threads the bilayer. A Histidine box-3 motif is present at residues 242 to 248 (AHDMHHL).

It belongs to the sterol desaturase family. Fe cation serves as cofactor.

The protein localises to the membrane. In terms of biological role, probable sterol desaturase. This Caenorhabditis briggsae protein is Cholesterol 25-hydroxylase-like protein.